The sequence spans 162 residues: MRILKPYLRSTSIQCYLCLLLNSHFLTEACIPVFILSCINAGLPKTEANWQDVISDLKIIDKIIQSLHIDATLYTESDVHPNCKVTAMKCFLLELHVISLESKNETIHQTVENIIILANSGLSSNRNITETGCKECEELEEKNIKEFLQSFVHIVQMFINTS.

The signal sequence occupies residues Met-1 to Ala-29. A propeptide spanning residues Cys-30–Ala-48 is cleaved from the precursor. 2 disulfide bridges follow: Cys-83–Cys-133 and Cys-90–Cys-136. Asn-104 and Asn-127 each carry an N-linked (GlcNAc...) asparagine glycan.

This sequence belongs to the IL-15/IL-21 family.

The protein resides in the secreted. In terms of biological role, cytokine that plays a major role in the development of inflammatory and protective immune responses to microbial invaders and parasites by modulating immune cells of both the innate and adaptive immune systems. Stimulates the proliferation of natural killer cells, T-cells and B-cells and promotes the secretion of several cytokines. In monocytes, induces the production of IL8 and monocyte chemotactic protein 1/CCL2, two chemokines that attract neutrophils and monocytes respectively to sites of infection. Unlike most cytokines, which are secreted in soluble form, IL15 is expressed in association with its high affinity IL15RA on the surface of IL15-producing cells and delivers signals to target cells that express IL2RB and IL2RG receptor subunits. Binding to its receptor triggers the phosphorylation of JAK1 and JAK3 and the recruitment and subsequent phosphorylation of signal transducer and activator of transcription-3/STAT3 and STAT5. In mast cells, induces the rapid tyrosine phosphorylation of STAT6 and thereby controls mast cell survival and release of cytokines such as IL4. The protein is Interleukin-15 (IL15) of Felis catus (Cat).